The following is a 290-amino-acid chain: ATP synthase gamma chain (290 aa).

Belongs to the ATPase gamma chain family. In terms of assembly, F-type ATPases have 2 components, CF(1) - the catalytic core - and CF(0) - the membrane proton channel. CF(1) has five subunits: alpha(3), beta(3), gamma(1), delta(1), epsilon(1). CF(0) has three main subunits: a, b and c.

It is found in the cell inner membrane. Its function is as follows. Produces ATP from ADP in the presence of a proton gradient across the membrane. The gamma chain is believed to be important in regulating ATPase activity and the flow of protons through the CF(0) complex. The sequence is that of ATP synthase gamma chain from Dinoroseobacter shibae (strain DSM 16493 / NCIMB 14021 / DFL 12).